Here is a 73-residue protein sequence, read N- to C-terminus: UPF0235 protein SYO3AOP1_0257 (73 aa).

The protein belongs to the UPF0235 family.

The polypeptide is UPF0235 protein SYO3AOP1_0257 (Sulfurihydrogenibium sp. (strain YO3AOP1)).